A 128-amino-acid chain; its full sequence is Large ribosomal subunit protein bL12 (128 aa).

This sequence belongs to the bacterial ribosomal protein bL12 family. As to quaternary structure, homodimer. Part of the ribosomal stalk of the 50S ribosomal subunit. Forms a multimeric L10(L12)X complex, where L10 forms an elongated spine to which 2 to 4 L12 dimers bind in a sequential fashion. Binds GTP-bound translation factors.

In terms of biological role, forms part of the ribosomal stalk which helps the ribosome interact with GTP-bound translation factors. Is thus essential for accurate translation. This Corynebacterium efficiens (strain DSM 44549 / YS-314 / AJ 12310 / JCM 11189 / NBRC 100395) protein is Large ribosomal subunit protein bL12.